We begin with the raw amino-acid sequence, 336 residues long: GTPase Obg (336 aa).

Residues 1–159 (MKFLDETKVY…KTIWLRLKLI (159 aa)) enclose the Obg domain. In terms of domain architecture, OBG-type G spans 160–327 (ADAGLVGLPN…ALRALRSVIA (168 aa)). GTP contacts are provided by residues 166-173 (GLPNAGKS), 191-195 (FTTLH), 212-215 (DIPG), 279-282 (SQID), and 308-310 (SAV). 2 residues coordinate Mg(2+): Ser-173 and Thr-193.

The protein belongs to the TRAFAC class OBG-HflX-like GTPase superfamily. OBG GTPase family. As to quaternary structure, monomer. Mg(2+) serves as cofactor.

It localises to the cytoplasm. Functionally, an essential GTPase which binds GTP, GDP and possibly (p)ppGpp with moderate affinity, with high nucleotide exchange rates and a fairly low GTP hydrolysis rate. Plays a role in control of the cell cycle, stress response, ribosome biogenesis and in those bacteria that undergo differentiation, in morphogenesis control. This is GTPase Obg from Rhizobium meliloti (strain 1021) (Ensifer meliloti).